The chain runs to 147 residues: ATP synthase subunit 9, mitochondrial (147 aa).

The transit peptide at Met-1–Ala-66 directs the protein to the mitochondrion. The next 2 membrane-spanning stretches (helical) occupy residues Ser-86–Leu-106 and Ala-123–Met-143.

It belongs to the ATPase C chain family. F-type ATPases have 2 components, CF(1) - the catalytic core - and CF(0) - the membrane proton channel. CF(1) has five subunits: alpha(3), beta(3), gamma(1), delta(1), epsilon(1). CF(0) has three main subunits: a, b and c.

It is found in the mitochondrion membrane. Its function is as follows. Mitochondrial membrane ATP synthase (F(1)F(0) ATP synthase or Complex V) produces ATP from ADP in the presence of a proton gradient across the membrane which is generated by electron transport complexes of the respiratory chain. F-type ATPases consist of two structural domains, F(1) - containing the extramembraneous catalytic core and F(0) - containing the membrane proton channel, linked together by a central stalk and a peripheral stalk. During catalysis, ATP synthesis in the catalytic domain of F(1) is coupled via a rotary mechanism of the central stalk subunits to proton translocation. Part of the complex F(0) domain. A homomeric c-ring of probably 10 subunits is part of the complex rotary element. In Neurospora crassa (strain ATCC 24698 / 74-OR23-1A / CBS 708.71 / DSM 1257 / FGSC 987), this protein is ATP synthase subunit 9, mitochondrial (oli).